A 194-amino-acid polypeptide reads, in one-letter code: Molybdenum cofactor guanylyltransferase (194 aa).

Residues 12–14 (LAG), K25, N53, D70, and D100 contribute to the GTP site. Residue D100 participates in Mg(2+) binding.

The protein belongs to the MobA family. In terms of assembly, monomer. Requires Mg(2+) as cofactor.

It localises to the cytoplasm. The enzyme catalyses Mo-molybdopterin + GTP + H(+) = Mo-molybdopterin guanine dinucleotide + diphosphate. In terms of biological role, transfers a GMP moiety from GTP to Mo-molybdopterin (Mo-MPT) cofactor (Moco or molybdenum cofactor) to form Mo-molybdopterin guanine dinucleotide (Mo-MGD) cofactor. This chain is Molybdenum cofactor guanylyltransferase, found in Aliivibrio fischeri (strain MJ11) (Vibrio fischeri).